The following is a 155-amino-acid chain: Small ribosomal subunit protein uS7 (155 aa).

Belongs to the universal ribosomal protein uS7 family. As to quaternary structure, part of the 30S ribosomal subunit. Contacts proteins S9 and S11.

Functionally, one of the primary rRNA binding proteins, it binds directly to 16S rRNA where it nucleates assembly of the head domain of the 30S subunit. Is located at the subunit interface close to the decoding center, probably blocks exit of the E-site tRNA. In Corynebacterium diphtheriae (strain ATCC 700971 / NCTC 13129 / Biotype gravis), this protein is Small ribosomal subunit protein uS7.